Reading from the N-terminus, the 123-residue chain is uncharacterized protein (123 aa).

The signal sequence occupies residues 1-25 (MKHGIKALLITLSLACAGMSHSALA). The span at 40 to 53 (EAPAAQSKAAVPAK) shows a compositional bias: low complexity. Positions 40–62 (EAPAAQSKAAVPAKASDEEGTRV) are disordered. HhH domains follow at residues 60 to 90 (TRVS…IVSY) and 91 to 120 (REEY…NLAV).

This is an uncharacterized protein from Escherichia coli (strain K12).